The chain runs to 381 residues: Prostatic acid phosphatase (381 aa).

Residues 1-31 (MRAVPLPLSRTASLSLGFLLLLSLCLDPGQA) form the signal peptide. Substrate is bound at residue Arg42. Catalysis depends on His43, which acts as the Nucleophile. Position 46 (Arg46) interacts with substrate. N-linked (GlcNAc...) asparagine glycosylation occurs at Asn93. A substrate-binding site is contributed by Arg110. 3 cysteine pairs are disulfide-bonded: Cys160–Cys371, Cys214–Cys312, and Cys346–Cys350. A glycan (N-linked (GlcNAc...) asparagine) is linked at Asn219. His288 provides a ligand contact to substrate. Asp289 (proton donor) is an active-site residue. A glycan (N-linked (GlcNAc...) asparagine) is linked at Asn332.

Belongs to the histidine acid phosphatase family. Homodimer; dimer formation is required for phosphatase activity. In terms of tissue distribution, expressed in salivary gland, thymus and thyroid gland. As to expression, widely expressed in prostate lobes, brain, kidney, liver, lung, muscle, placenta, salivary gland, spleen, thyroid and thymus. Locates to Schwann cells and fibroblasts. Expressed in peptidergic and non-peptidergic nociceptive (pain-sensing) neurons. Preferentially expressed in non-peptidergic doral root ganglia neurons.

It localises to the secreted. The protein localises to the cell membrane. Its subcellular location is the lysosome membrane. The enzyme catalyses a phosphate monoester + H2O = an alcohol + phosphate. It catalyses the reaction a ribonucleoside 5'-phosphate + H2O = a ribonucleoside + phosphate. The catalysed reaction is 1-(9Z-octadecenoyl)-sn-glycero-3-phosphate + H2O = 1-(9Z-octadecenoyl)-sn-glycerol + phosphate. It carries out the reaction O-phospho-L-tyrosyl-[protein] + H2O = L-tyrosyl-[protein] + phosphate. In terms of biological role, a non-specific tyrosine phosphatase that dephosphorylates a diverse number of substrates under acidic conditions (pH 4-6) including alkyl, aryl, and acyl orthophosphate monoesters and phosphorylated proteins. Has lipid phosphatase activity and inactivates lysophosphatidic acid in seminal plasma. In addition to its tyrosine phosphatase activity, also has ecto-5'-nucleotidase activity in dorsal root ganglion (DRG) neurons. Generates adenosine from AMP. This extracellular adenosine leads to a decrease in chronic pain by activating A1R in nociceptive neurons. This chain is Prostatic acid phosphatase (Acp3), found in Mus musculus (Mouse).